Consider the following 192-residue polypeptide: Imidazoleglycerol-phosphate dehydratase (192 aa).

Belongs to the imidazoleglycerol-phosphate dehydratase family.

It localises to the cytoplasm. It carries out the reaction D-erythro-1-(imidazol-4-yl)glycerol 3-phosphate = 3-(imidazol-4-yl)-2-oxopropyl phosphate + H2O. It participates in amino-acid biosynthesis; L-histidine biosynthesis; L-histidine from 5-phospho-alpha-D-ribose 1-diphosphate: step 6/9. The protein is Imidazoleglycerol-phosphate dehydratase of Hydrogenobaculum sp. (strain Y04AAS1).